A 284-amino-acid polypeptide reads, in one-letter code: Tropomyosin-2 (284 aa).

Positions 1 to 284 (MDAIKKKMQA…DQTFAELTGY (284 aa)) form a coiled coil. The interval 82–110 (ESEVATQNRKVQQIEEDLEKSEERSTTAQ) is disordered.

The protein belongs to the tropomyosin family. As to quaternary structure, homodimer.

Tropomyosin, in association with the troponin complex, plays a central role in the calcium dependent regulation of muscle contraction. May also regulate motor systems required to maintain nuclear integrity and apico-basal polarity during embryogenesis. The chain is Tropomyosin-2 (Tm2) from Drosophila melanogaster (Fruit fly).